Consider the following 151-residue polypeptide: Large ribosomal subunit protein eL8 (151 aa).

This sequence belongs to the eukaryotic ribosomal protein eL8 family. Part of the 50S ribosomal subunit. Probably part of the RNase P complex.

The protein localises to the cytoplasm. Functionally, multifunctional RNA-binding protein that recognizes the K-turn motif in ribosomal RNA, the RNA component of RNase P, box H/ACA, box C/D and box C'/D' sRNAs. The sequence is that of Large ribosomal subunit protein eL8 from Pyrobaculum aerophilum (strain ATCC 51768 / DSM 7523 / JCM 9630 / CIP 104966 / NBRC 100827 / IM2).